The primary structure comprises 721 residues: Protein Hook homolog 2 (721 aa).

The 117-residue stretch at 7–123 (VELCDSLLTW…KMVQLVLGCA (117 aa)) folds into the Calponin-homology (CH) domain. Coiled-coil stretches lie at residues 181 to 425 (LSED…RCSH) and 484 to 659 (DLQN…EKLI). A disordered region spans residues 696–721 (TNARRGQISRSHTLLPRYTDKRQSLS).

Belongs to the hook family. Interacts with microtubules.

The protein resides in the cytoplasm. It is found in the cytoskeleton. It localises to the microtubule organizing center. Its subcellular location is the centrosome. Its function is as follows. May function to promote vesicle trafficking and/or fusion. May contribute to the establishment and maintenance of centrosome function. This chain is Protein Hook homolog 2 (hook2), found in Xenopus laevis (African clawed frog).